The chain runs to 328 residues: DNA-directed RNA polymerase subunit alpha (328 aa).

The alpha N-terminal domain (alpha-NTD) stretch occupies residues 1–230; sequence MSNHGLQMPE…DHVSFFIQLE (230 aa). The segment at 248–328 is alpha C-terminal domain (alpha-CTD); that stretch reads RIRELLAQPV…EEYLEEKKAS (81 aa).

Belongs to the RNA polymerase alpha chain family. As to quaternary structure, homodimer. The RNAP catalytic core consists of 2 alpha, 1 beta, 1 beta' and 1 omega subunit. When a sigma factor is associated with the core the holoenzyme is formed, which can initiate transcription.

The enzyme catalyses RNA(n) + a ribonucleoside 5'-triphosphate = RNA(n+1) + diphosphate. DNA-dependent RNA polymerase catalyzes the transcription of DNA into RNA using the four ribonucleoside triphosphates as substrates. In Salinibacter ruber (strain DSM 13855 / M31), this protein is DNA-directed RNA polymerase subunit alpha.